The chain runs to 267 residues: 14-3-3-like protein GF14 phi (267 aa).

Ala-2 carries the post-translational modification N-acetylalanine. Residues Ser-73 and Ser-196 each carry the phosphoserine modification. At Thr-217 the chain carries Phosphothreonine. Positions 244 to 267 are disordered; the sequence is MQDESPEEIKEAAAPKPAEEQKEI. At Ser-248 the chain carries Phosphoserine. Positions 250–267 are enriched in basic and acidic residues; it reads EEIKEAAAPKPAEEQKEI.

The protein belongs to the 14-3-3 family. Interacts with FD. Interacts with CINV1.

It localises to the nucleus. It is found in the cytoplasm. Functionally, is associated with a DNA binding complex that binds to the G box, a well-characterized cis-acting DNA regulatory element found in plant genes. The protein is 14-3-3-like protein GF14 phi (GRF4) of Arabidopsis thaliana (Mouse-ear cress).